Here is a 346-residue protein sequence, read N- to C-terminus: Cell division protein ZipA (346 aa).

Residues 1–6 (MEDLQL) are Periplasmic-facing. Residues 7 to 27 (VLFVLGAIAIVAVLVHGFWSI) traverse the membrane as a helical segment. At 28–346 (RRQQPKSLKD…DYLHRIRANA (319 aa)) the chain is on the cytoplasmic side. Residues 116 to 146 (EPSMAQPDFSLQSPTAKEQHRGPKASRQEPV) form a disordered region.

The protein belongs to the ZipA family. In terms of assembly, interacts with FtsZ via their C-terminal domains.

Its subcellular location is the cell inner membrane. Functionally, essential cell division protein that stabilizes the FtsZ protofilaments by cross-linking them and that serves as a cytoplasmic membrane anchor for the Z ring. Also required for the recruitment to the septal ring of downstream cell division proteins. This is Cell division protein ZipA from Shewanella sp. (strain ANA-3).